We begin with the raw amino-acid sequence, 278 residues long: Potassium/proton antiporter CemA (278 aa).

4 consecutive transmembrane segments (helical) span residues 61–81 (LIVLVVFPVVVHQVSKNFIIG), 155–175 (AIKNILADSISISVFILLIVL), 203–223 (IILFTDMFIGFHSPHGWEVVI), and 238–258 (FIFLFIATFPVSLDTVFKYWI).

It belongs to the CemA family.

The protein resides in the plastid. Its subcellular location is the chloroplast inner membrane. The catalysed reaction is K(+)(in) + H(+)(out) = K(+)(out) + H(+)(in). In terms of biological role, contributes to K(+)/H(+) antiport activity by supporting proton efflux to control proton extrusion and homeostasis in chloroplasts in a light-dependent manner to modulate photosynthesis. Prevents excessive induction of non-photochemical quenching (NPQ) under continuous-light conditions. Indirectly promotes efficient inorganic carbon uptake into chloroplasts. This chain is Potassium/proton antiporter CemA, found in Cyanidium caldarium (Red alga).